Consider the following 299-residue polypeptide: Aspartate carbamoyltransferase catalytic subunit (299 aa).

Carbamoyl phosphate contacts are provided by R54 and T55. K83 is an L-aspartate binding site. Carbamoyl phosphate contacts are provided by R104, H132, and Q135. Residues R165 and R222 each contribute to the L-aspartate site. L261 and P262 together coordinate carbamoyl phosphate.

The protein belongs to the aspartate/ornithine carbamoyltransferase superfamily. ATCase family. Heterooligomer of catalytic and regulatory chains.

It catalyses the reaction carbamoyl phosphate + L-aspartate = N-carbamoyl-L-aspartate + phosphate + H(+). The protein operates within pyrimidine metabolism; UMP biosynthesis via de novo pathway; (S)-dihydroorotate from bicarbonate: step 2/3. Its function is as follows. Catalyzes the condensation of carbamoyl phosphate and aspartate to form carbamoyl aspartate and inorganic phosphate, the committed step in the de novo pyrimidine nucleotide biosynthesis pathway. The chain is Aspartate carbamoyltransferase catalytic subunit from Archaeoglobus fulgidus (strain ATCC 49558 / DSM 4304 / JCM 9628 / NBRC 100126 / VC-16).